The following is a 144-amino-acid chain: Small ribosomal subunit protein eS19A (144 aa).

It belongs to the eukaryotic ribosomal protein eS19 family. As to quaternary structure, component of the small ribosomal subunit (SSU). Mature yeast ribosomes consist of a small (40S) and a large (60S) subunit. The 40S small subunit contains 1 molecule of ribosomal RNA (18S rRNA) and 33 different proteins (encoded by 57 genes). The large 60S subunit contains 3 rRNA molecules (25S, 5.8S and 5S rRNA) and 46 different proteins (encoded by 81 genes).

It is found in the cytoplasm. In terms of biological role, component of the ribosome, a large ribonucleoprotein complex responsible for the synthesis of proteins in the cell. The small ribosomal subunit (SSU) binds messenger RNAs (mRNAs) and translates the encoded message by selecting cognate aminoacyl-transfer RNA (tRNA) molecules. The large subunit (LSU) contains the ribosomal catalytic site termed the peptidyl transferase center (PTC), which catalyzes the formation of peptide bonds, thereby polymerizing the amino acids delivered by tRNAs into a polypeptide chain. The nascent polypeptides leave the ribosome through a tunnel in the LSU and interact with protein factors that function in enzymatic processing, targeting, and the membrane insertion of nascent chains at the exit of the ribosomal tunnel. eS19 is required for proper maturation of the small (40S) ribosomal subunit. Binds to 40S pre-ribosomal particles, probably required after association of NOC4 but before association of ENP1, TSR1 and RIO2 with 20/21S pre-rRNA. The sequence is that of Small ribosomal subunit protein eS19A from Saccharomyces cerevisiae (strain ATCC 204508 / S288c) (Baker's yeast).